The primary structure comprises 571 residues: Septation ring formation regulator EzrA (571 aa).

Residues 1–3 (MYY) are Extracellular-facing. The chain crosses the membrane as a helical span at residues 4-22 (MLIGFIIVVIAVISAGYIL). Residues 23 to 571 (KRKHYQRINE…ESKVSVDDIE (549 aa)) lie on the Cytoplasmic side of the membrane. Coiled coils occupy residues 170 to 215 (EAKL…QMER), 248 to 299 (LAQM…TLEH), 326 to 374 (DALA…ASGE), 400 to 437 (NFAEELRSLRKDELEARDDAERMRRAIITLDRKMERER), and 478 to 529 (RIAE…ENHF).

It belongs to the EzrA family.

It is found in the cell membrane. Its function is as follows. Negative regulator of FtsZ ring formation; modulates the frequency and position of FtsZ ring formation. Inhibits FtsZ ring formation at polar sites. Interacts either with FtsZ or with one of its binding partners to promote depolymerization. This chain is Septation ring formation regulator EzrA, found in Listeria innocua serovar 6a (strain ATCC BAA-680 / CLIP 11262).